A 498-amino-acid polypeptide reads, in one-letter code: UDP-N-acetylmuramoyl-L-alanyl-D-glutamate--2,6-diaminopimelate ligase (498 aa).

Position 29 (Ser-29) interacts with UDP-N-acetyl-alpha-D-muramoyl-L-alanyl-D-glutamate. Gly-120–Ser-126 contributes to the ATP binding site. Residues Thr-162 to Thr-163, Ser-189, Gln-195, and Arg-197 each bind UDP-N-acetyl-alpha-D-muramoyl-L-alanyl-D-glutamate. At Lys-229 the chain carries N6-carboxylysine. Residues Arg-392, Asp-416–Arg-419, Gly-466, and Glu-470 each bind meso-2,6-diaminopimelate. The Meso-diaminopimelate recognition motif motif lies at Asp-416 to Arg-419.

This sequence belongs to the MurCDEF family. MurE subfamily. Requires Mg(2+) as cofactor. In terms of processing, carboxylation is probably crucial for Mg(2+) binding and, consequently, for the gamma-phosphate positioning of ATP.

The protein resides in the cytoplasm. It catalyses the reaction UDP-N-acetyl-alpha-D-muramoyl-L-alanyl-D-glutamate + meso-2,6-diaminopimelate + ATP = UDP-N-acetyl-alpha-D-muramoyl-L-alanyl-gamma-D-glutamyl-meso-2,6-diaminopimelate + ADP + phosphate + H(+). It functions in the pathway cell wall biogenesis; peptidoglycan biosynthesis. In terms of biological role, catalyzes the addition of meso-diaminopimelic acid to the nucleotide precursor UDP-N-acetylmuramoyl-L-alanyl-D-glutamate (UMAG) in the biosynthesis of bacterial cell-wall peptidoglycan. The polypeptide is UDP-N-acetylmuramoyl-L-alanyl-D-glutamate--2,6-diaminopimelate ligase (Alkalilimnicola ehrlichii (strain ATCC BAA-1101 / DSM 17681 / MLHE-1)).